The primary structure comprises 245 residues: MIIPALDLIDGTVVRLHQGDYARQRDYGNDPLPRLQDYAAQGAGVLHLVDLTGAKDPAKRQIPLIKTLVAGVNVPVQVGGGVRTEEDVAALLKAGVARVVIGSTAVKSPDVVKGWFERFGAQALVLALDVRIDEHGNKQVAVSGWQENSGVSLEQLVETYLPVGLKHVLCTDISRDGTLAGSNVSLYEEICARYPQIAFQSSGGIGDIGDIAALRGTGVRGVIVGRALLEGKFTVKEAIQCWQNV.

Asp-7 functions as the Proton acceptor in the catalytic mechanism. The Proton donor role is filled by Asp-129.

Belongs to the HisA/HisF family.

It is found in the cytoplasm. It catalyses the reaction 1-(5-phospho-beta-D-ribosyl)-5-[(5-phospho-beta-D-ribosylamino)methylideneamino]imidazole-4-carboxamide = 5-[(5-phospho-1-deoxy-D-ribulos-1-ylimino)methylamino]-1-(5-phospho-beta-D-ribosyl)imidazole-4-carboxamide. It functions in the pathway amino-acid biosynthesis; L-histidine biosynthesis; L-histidine from 5-phospho-alpha-D-ribose 1-diphosphate: step 4/9. This is 1-(5-phosphoribosyl)-5-[(5-phosphoribosylamino)methylideneamino] imidazole-4-carboxamide isomerase from Salmonella agona (strain SL483).